We begin with the raw amino-acid sequence, 423 residues long: Maintenance of mitochondrial morphology protein 1 (423 aa).

Over 1–20 (MTIPAPIPDKAESSLSFTQG) the chain is Lumenal. The chain crosses the membrane as a helical span at residues 21–41 (LLLGQLSIVILIGAFIKFFIF). Residues 42–423 (GDPPSPDVTA…PGSMPGLSMT (382 aa)) are Cytoplasmic-facing. One can recognise an SMP-LTD domain in the interval 115-327 (QPESLDWFNV…EPRFQQIELP (213 aa)). Disordered stretches follow at residues 332–372 (RKKN…KEVE) and 387–423 (SLDV…LSMT). Residues 355 to 372 (RSRDVERDLREEARKEVE) show a composition bias toward basic and acidic residues.

It belongs to the MMM1 family. Homodimer. Component of the ER-mitochondria encounter structure (ERMES) or MDM complex, composed of MMM1, MDM10, MDM12 and MDM34. An MMM1 homodimer associates with one molecule of MDM12 on each side in a pairwise head-to-tail manner, and the SMP-LTD domains of MMM1 and MDM12 generate a continuous hydrophobic tunnel for phospholipid trafficking.

It is found in the endoplasmic reticulum membrane. In terms of biological role, component of the ERMES/MDM complex, which serves as a molecular tether to connect the endoplasmic reticulum (ER) and mitochondria. Components of this complex are involved in the control of mitochondrial shape and protein biogenesis, and function in nonvesicular lipid trafficking between the ER and mitochondria. The MDM12-MMM1 subcomplex functions in the major beta-barrel assembly pathway that is responsible for biogenesis of all outer membrane beta-barrel proteins, and acts in a late step after the SAM complex. The MDM10-MDM12-MMM1 subcomplex further acts in the TOM40-specific pathway after the action of the MDM12-MMM1 complex. Essential for establishing and maintaining the structure of mitochondria and maintenance of mtDNA nucleoids. The chain is Maintenance of mitochondrial morphology protein 1 from Botryotinia fuckeliana (strain B05.10) (Noble rot fungus).